The primary structure comprises 357 residues: UDP-N-acetylglucosamine--N-acetylmuramyl-(pentapeptide) pyrophosphoryl-undecaprenol N-acetylglucosamine transferase (357 aa).

Residues Thr14–Gly16, Asn120, Arg164, Ser194, and Gln291 contribute to the UDP-N-acetyl-alpha-D-glucosamine site.

The protein belongs to the glycosyltransferase 28 family. MurG subfamily.

The protein resides in the cell inner membrane. The enzyme catalyses di-trans,octa-cis-undecaprenyl diphospho-N-acetyl-alpha-D-muramoyl-L-alanyl-D-glutamyl-meso-2,6-diaminopimeloyl-D-alanyl-D-alanine + UDP-N-acetyl-alpha-D-glucosamine = di-trans,octa-cis-undecaprenyl diphospho-[N-acetyl-alpha-D-glucosaminyl-(1-&gt;4)]-N-acetyl-alpha-D-muramoyl-L-alanyl-D-glutamyl-meso-2,6-diaminopimeloyl-D-alanyl-D-alanine + UDP + H(+). Its pathway is cell wall biogenesis; peptidoglycan biosynthesis. Functionally, cell wall formation. Catalyzes the transfer of a GlcNAc subunit on undecaprenyl-pyrophosphoryl-MurNAc-pentapeptide (lipid intermediate I) to form undecaprenyl-pyrophosphoryl-MurNAc-(pentapeptide)GlcNAc (lipid intermediate II). In Fusobacterium nucleatum subsp. nucleatum (strain ATCC 25586 / DSM 15643 / BCRC 10681 / CIP 101130 / JCM 8532 / KCTC 2640 / LMG 13131 / VPI 4355), this protein is UDP-N-acetylglucosamine--N-acetylmuramyl-(pentapeptide) pyrophosphoryl-undecaprenol N-acetylglucosamine transferase.